We begin with the raw amino-acid sequence, 73 residues long: Putative antitoxin VapB21 (73 aa).

Belongs to the UPF0330 family.

In terms of biological role, possibly the antitoxin component of a type II toxin-antitoxin (TA) system. Its cognate toxin is VapC21 (Potential). This chain is Putative antitoxin VapB21 (vapB21), found in Sulfurisphaera tokodaii (strain DSM 16993 / JCM 10545 / NBRC 100140 / 7) (Sulfolobus tokodaii).